The following is a 119-amino-acid chain: NADH-quinone oxidoreductase subunit A (119 aa).

3 helical membrane passes run 9 to 29 (VLLF…LGYV), 63 to 83 (LVAI…PWAV), and 88 to 108 (VGMT…VGFA).

This sequence belongs to the complex I subunit 3 family. NDH-1 is composed of 14 different subunits. Subunits NuoA, H, J, K, L, M, N constitute the membrane sector of the complex.

The protein resides in the cell inner membrane. The enzyme catalyses a quinone + NADH + 5 H(+)(in) = a quinol + NAD(+) + 4 H(+)(out). NDH-1 shuttles electrons from NADH, via FMN and iron-sulfur (Fe-S) centers, to quinones in the respiratory chain. The immediate electron acceptor for the enzyme in this species is believed to be ubiquinone. Couples the redox reaction to proton translocation (for every two electrons transferred, four hydrogen ions are translocated across the cytoplasmic membrane), and thus conserves the redox energy in a proton gradient. This is NADH-quinone oxidoreductase subunit A from Paracidovorax citrulli (strain AAC00-1) (Acidovorax citrulli).